The sequence spans 1682 residues: Cilia- and flagella-associated protein 43 (1682 aa).

6 WD repeats span residues 168–207, 262–305, 315–354, 358–397, 488–527, and 697–738; these read NPGMDVSQMSFNPMNWHQMCLSSSSAMSVWTIERSNQEHH, PKDD…VTVL, DGAPLINPLTLVYQKDGILASGIDGVIYSFIIKDSKYQVK, EFDGPVTHLVFSPSYKMLLIQTDKGSVYIYTFGAEMPLDK, LSQSPVKIVTYDQRGIFLLVGTEEGNIFVIDARPSKSFQI, and SHQG…ANIA. The interval 767-790 is disordered; that stretch reads RESTNEQQEETTESQKHLNSDSSE. Coiled-coil stretches lie at residues 926–960 and 1171–1223; these read KERTEEELQELSKVMQQKKTEIECLKLRKEIVEVQ and SEDE…HLKR.

Belongs to the CFAP43 family. As to expression, expressed in testis. Expressed in the lung, brain, oviduct and nasal cavity.

It localises to the cell projection. The protein resides in the cilium. The protein localises to the flagellum. It is found in the cytoplasm. Its subcellular location is the cytoskeleton. It localises to the flagellum axoneme. The protein resides in the cilium axoneme. Functionally, flagellar protein involved in sperm flagellum axoneme organization and function. Involved in the regulation of the beating frequency of motile cilia on the epithelial cells of the respiratory tract. This is Cilia- and flagella-associated protein 43 from Mus musculus (Mouse).